The chain runs to 388 residues: Proline-rich protein 5 (388 aa).

Interaction with RICTOR regions lie at residues 10–95 and 188–218; these read MSSP…LTKG and HESR…YGLH. Positions 12-31 are disordered; sequence SPSLSDLGKREPAAAADERG. Basic and acidic residues predominate over residues 18-31; sequence LGKREPAAAADERG. S252 is subject to Phosphoserine. A disordered region spans residues 254–388; that stretch reads SYNTPLLNPV…EGSGGRQSVV (135 aa). The segment covering 336–346 has biased composition (polar residues); sequence TRSSLPRSSPE.

It belongs to the PROTOR family. In terms of assembly, associated component of the mechanistic target of rapamycin complex 2 (mTORC2). Binds directly to MTOR and RICTOR within the TORC2 complex. In terms of tissue distribution, most abundant in kidney and liver. Also highly expressed in brain, spleen, testis and placenta. Overexpressed in several colorectal tumors.

In terms of biological role, associated subunit of mTORC2, which regulates cell growth and survival in response to hormonal signals. mTORC2 is activated by growth factors, but, in contrast to mTORC1, seems to be nutrient-insensitive. mTORC2 seems to function upstream of Rho GTPases to regulate the actin cytoskeleton, probably by activating one or more Rho-type guanine nucleotide exchange factors. PRR5 plays an important role in regulation of PDGFRB expression and in modulation of platelet-derived growth factor signaling. May act as a tumor suppressor in breast cancer. This chain is Proline-rich protein 5 (PRR5), found in Homo sapiens (Human).